The sequence spans 73 residues: Defensin-like protein 10 (73 aa).

A signal peptide spans 1 to 28; sequence MKLSLRLISALLMSVMLLFATGMGPVEA. Intrachain disulfides connect cysteine 31–cysteine 73, cysteine 42–cysteine 62, cysteine 48–cysteine 67, and cysteine 52–cysteine 69.

The protein belongs to the DEFL family.

The protein resides in the secreted. Confers broad-spectrum resistance to pathogens. The polypeptide is Defensin-like protein 10 (PDF2.6) (Arabidopsis thaliana (Mouse-ear cress)).